The chain runs to 230 residues: Ion-translocating oxidoreductase complex subunit E (230 aa).

6 helical membrane-spanning segments follow: residues 18–38 (ALVQ…ATNA), 39–59 (LGLG…VSAL), 63–83 (TPAE…VSAV), 86–106 (LINA…PLIV), 125–145 (WLSA…MFVL), and 182–202 (PFLL…MLAV).

This sequence belongs to the NqrDE/RnfAE family. In terms of assembly, the complex is composed of six subunits: RsxA, RsxB, RsxC, RsxD, RsxE and RsxG.

It is found in the cell inner membrane. In terms of biological role, part of a membrane-bound complex that couples electron transfer with translocation of ions across the membrane. Required to maintain the reduced state of SoxR. The sequence is that of Ion-translocating oxidoreductase complex subunit E from Salmonella agona (strain SL483).